Reading from the N-terminus, the 377-residue chain is Probable G-protein coupled receptor F27E5.8 (377 aa).

Residues 1 to 34 (MSEQDSSSPKYMRFLLGNFTSAEMVTDGNFLIYC) lie on the Extracellular side of the membrane. Asn18 carries an N-linked (GlcNAc...) asparagine glycan. Residues 35–55 (IEMGLLVIGVLENIFMIGAVF) traverse the membrane as a helical segment. Residues 56 to 71 (STSCLHLNLRILICNC) are Cytoplasmic-facing. The helical transmembrane segment at 72–92 (CLGFILMAVGRAMIAVPLCIA) threads the bilayer. Residues 93-105 (HLRDVDISSHAWC) lie on the Extracellular side of the membrane. A helical membrane pass occupies residues 106 to 126 (FIANAVHHSSADSVCLSFVFI). The Cytoplasmic segment spans residues 127 to 144 (MLERTAGTIWSKDYEKTK). The helical transmembrane segment at 145 to 165 (IHIFPCIFAFLQWFIPMFMIL) threads the bilayer. The Extracellular segment spans residues 166-195 (GNFLDRANRMEHFLLYPHLPCQIEYLTPTM). A helical transmembrane segment spans residues 196-216 (FMITIFIIVIGFIASVGGITI). Topologically, residues 217-251 (VYNKNIKKYNTRDIWFNTVNLSERYQITENIRSTH) are cytoplasmic. A helical membrane pass occupies residues 252–272 (LLFPLLALMLIFSTLSVSVLI). The Extracellular portion of the chain corresponds to 273 to 303 (YGGYWVSVMTKEPARFEEVVKWFGRGGEAAQ). The chain crosses the membrane as a helical span at residues 304–324 (LFDIITAIYTISFPICAFICH). Over 325–377 (PNLFRFLRKFIGWNSYAVRPSNLNEIGGFEMSTAPIRTQTEFHFQELSRQWNT) the chain is Cytoplasmic.

It belongs to the G-protein coupled receptor 1 family.

The protein localises to the cell membrane. The polypeptide is Probable G-protein coupled receptor F27E5.8 (Caenorhabditis elegans).